The following is a 126-amino-acid chain: MTLDPYYETMYILRPDIPEEEVESHVTKYRDMIVEAGAEVLDNQMRGKRRLAYPIAKHKEGIYVQLSHNGDGQQVEVLEKAMRISEDVIRYLTVKQEGPLPAPRVVPGTEAPEPAQAAETPEPEAS.

The segment at 99-126 (PLPAPRVVPGTEAPEPAQAAETPEPEAS) is disordered. Low complexity predominate over residues 107-120 (PGTEAPEPAQAAET).

It belongs to the bacterial ribosomal protein bS6 family.

Binds together with bS18 to 16S ribosomal RNA. This is Small ribosomal subunit protein bS6 from Synechococcus sp. (strain CC9902).